The primary structure comprises 164 residues: Aspartate carbamoyltransferase regulatory chain (164 aa).

Residues Cys-116, Cys-121, Cys-146, and Cys-149 each contribute to the Zn(2+) site.

This sequence belongs to the PyrI family. Contains catalytic and regulatory chains. Requires Zn(2+) as cofactor.

Functionally, involved in allosteric regulation of aspartate carbamoyltransferase. The protein is Aspartate carbamoyltransferase regulatory chain of Staphylothermus marinus (strain ATCC 43588 / DSM 3639 / JCM 9404 / F1).